The sequence spans 203 residues: E3 ubiquitin-protein ligase rnf152-A (203 aa).

An RING-type; degenerate zinc finger spans residues 12–55; the sequence is CQICFNYYSPRRRPKLLDCKRTCCSVCLQQMRACQKDLRCPWCR. A helical transmembrane segment spans residues 167–187; sequence SGICTVILVACVLVFLLGIVL.

It belongs to the RNF152 family.

It is found in the lysosome membrane. The enzyme catalyses S-ubiquitinyl-[E2 ubiquitin-conjugating enzyme]-L-cysteine + [acceptor protein]-L-lysine = [E2 ubiquitin-conjugating enzyme]-L-cysteine + N(6)-ubiquitinyl-[acceptor protein]-L-lysine.. It functions in the pathway protein modification; protein ubiquitination. E3 ubiquitin-protein ligase that acts as a negative regulator of mTORC1 signaling by mediating ubiquitination of RagA/RRAGA and RHEB. Catalyzes 'Lys-63'-linked polyubiquitination of RagA/RRAGA in response to amino acid starvation, thereby regulating mTORC1 signaling. Also mediates monoubiquitination of RHEB, promoting its association with the TSC-TBC complex and subsequent inhibition. Also mediates 'Lys-48'-linked polyubiquitination of target proteins and their subsequent targeting to the proteasome for degradation. This is E3 ubiquitin-protein ligase rnf152-A from Xenopus laevis (African clawed frog).